The primary structure comprises 666 residues: Secreted protein ARB_01864 (666 aa).

Positions M1–A18 are cleaved as a signal peptide. 7 N-linked (GlcNAc...) asparagine glycosylation sites follow: N160, N216, N342, N405, N594, N600, and N662. A disordered region spans residues R323 to P353.

It localises to the secreted. The protein is Secreted protein ARB_01864 of Arthroderma benhamiae (strain ATCC MYA-4681 / CBS 112371) (Trichophyton mentagrophytes).